The chain runs to 316 residues: Transaldolase (316 aa).

K132 acts as the Schiff-base intermediate with substrate in catalysis.

It belongs to the transaldolase family. Type 1 subfamily. As to quaternary structure, homodimer.

The protein resides in the cytoplasm. The catalysed reaction is D-sedoheptulose 7-phosphate + D-glyceraldehyde 3-phosphate = D-erythrose 4-phosphate + beta-D-fructose 6-phosphate. It participates in carbohydrate degradation; pentose phosphate pathway; D-glyceraldehyde 3-phosphate and beta-D-fructose 6-phosphate from D-ribose 5-phosphate and D-xylulose 5-phosphate (non-oxidative stage): step 2/3. Functionally, transaldolase is important for the balance of metabolites in the pentose-phosphate pathway. In Vibrio vulnificus (strain YJ016), this protein is Transaldolase.